Here is a 124-residue protein sequence, read N- to C-terminus: MPRVKSNVVRLKRKKQILKHAKGAFGGRSKLWKAAKETVERGWRYAYRDRKNKKRDFRRLWIVRINAAARLHDMSYNAFINGLHASGIEVDRKVLADLAVREPEAFAAIAEQAKKALDAKVAAA.

Belongs to the bacterial ribosomal protein bL20 family.

In terms of biological role, binds directly to 23S ribosomal RNA and is necessary for the in vitro assembly process of the 50S ribosomal subunit. It is not involved in the protein synthesizing functions of that subunit. This Gemmatimonas aurantiaca (strain DSM 14586 / JCM 11422 / NBRC 100505 / T-27) protein is Large ribosomal subunit protein bL20.